Consider the following 762-residue polypeptide: 5-methyltetrahydropteroyltriglutamate--homocysteine methyltransferase (762 aa).

5-methyltetrahydropteroyltri-L-glutamate-binding positions include 18 to 21 (REWK) and lysine 112. L-homocysteine is bound by residues 435-437 (IGS) and glutamate 488. Residues 435 to 437 (IGS) and glutamate 488 contribute to the L-methionine site. 5-methyltetrahydropteroyltri-L-glutamate-binding positions include 519–520 (RC) and tryptophan 565. Aspartate 603 contributes to the L-homocysteine binding site. L-methionine is bound at residue aspartate 603. Position 609 (glutamate 609) interacts with 5-methyltetrahydropteroyltri-L-glutamate. Residues histidine 645, cysteine 647, and glutamate 669 each contribute to the Zn(2+) site. Histidine 698 (proton donor) is an active-site residue. Residue cysteine 730 coordinates Zn(2+).

The protein belongs to the vitamin-B12 independent methionine synthase family. Requires Zn(2+) as cofactor.

It carries out the reaction 5-methyltetrahydropteroyltri-L-glutamate + L-homocysteine = tetrahydropteroyltri-L-glutamate + L-methionine. The protein operates within amino-acid biosynthesis; L-methionine biosynthesis via de novo pathway; L-methionine from L-homocysteine (MetE route): step 1/1. In terms of biological role, catalyzes the transfer of a methyl group from 5-methyltetrahydrofolate to homocysteine resulting in methionine formation. This chain is 5-methyltetrahydropteroyltriglutamate--homocysteine methyltransferase, found in Bacillus licheniformis (strain ATCC 14580 / DSM 13 / JCM 2505 / CCUG 7422 / NBRC 12200 / NCIMB 9375 / NCTC 10341 / NRRL NRS-1264 / Gibson 46).